Reading from the N-terminus, the 496-residue chain is ADP-dependent glucokinase (496 aa).

Residues 1 to 22 (MALWRGSACAGFLALAVGCVFL) form the signal peptide. Positions 52 to 496 (SPESRLAAAW…GLFYSEARPD (445 aa)) constitute an ADPK domain. Glutamate 297, glutamate 328, and aspartate 481 together coordinate Mg(2+). Aspartate 481 acts as the Proton acceptor in catalysis.

It belongs to the ADP-dependent glucokinase family. Monomer. The cofactor is Mg(2+).

The protein localises to the secreted. The catalysed reaction is D-glucose + ADP = D-glucose 6-phosphate + AMP + H(+). It participates in carbohydrate degradation; glycolysis. Catalyzes the phosphorylation of D-glucose to D-glucose 6-phosphate using ADP as the phosphate donor. GDP and CDP can replace ADP, but with reduced efficiency. This Mus musculus (Mouse) protein is ADP-dependent glucokinase (Adpgk).